A 569-amino-acid polypeptide reads, in one-letter code: Urease subunit alpha (569 aa).

Positions 132 to 569 (GGVDTHIHFI…VPLGQRYFLF (438 aa)) constitute a Urease domain. H137, H139, and K220 together coordinate Ni(2+). The residue at position 220 (K220) is an N6-carboxylysine. Position 222 (H222) interacts with substrate. Residues H249 and H275 each contribute to the Ni(2+) site. The Proton donor role is filled by H323. A Ni(2+)-binding site is contributed by D363.

The protein belongs to the metallo-dependent hydrolases superfamily. Urease alpha subunit family. As to quaternary structure, heterotrimer of UreA (gamma), UreB (beta) and UreC (alpha) subunits. Three heterotrimers associate to form the active enzyme. Ni cation serves as cofactor. Carboxylation allows a single lysine to coordinate two nickel ions.

The protein resides in the cytoplasm. The catalysed reaction is urea + 2 H2O + H(+) = hydrogencarbonate + 2 NH4(+). Its pathway is nitrogen metabolism; urea degradation; CO(2) and NH(3) from urea (urease route): step 1/1. The polypeptide is Urease subunit alpha (Bacillus subtilis (strain 168)).